We begin with the raw amino-acid sequence, 209 residues long: Dual-specificity protein phosphatase SDP1 (209 aa).

The span at 1-11 (MNIYTSPTRTP) shows a compositional bias: polar residues. The segment at 1-43 (MNIYTSPTRTPNIAPKSGQRPSLPMLATDERSTDKESPNEDRE) is disordered. A compositionally biased stretch (basic and acidic residues) spans 28–43 (TDERSTDKESPNEDRE). The cysteines at positions 47 and 142 are disulfide-linked. Positions 59–196 (GPLLVLPEKI…LMEWEVALNA (138 aa)) constitute a Tyrosine-protein phosphatase domain. His-111 lines the 4-O-phospho-L-tyrosine pocket. Catalysis depends on Cys-140, which acts as the Phosphocysteine intermediate.

It belongs to the protein-tyrosine phosphatase family. Non-receptor class dual specificity subfamily.

It carries out the reaction O-phospho-L-tyrosyl-[protein] + H2O = L-tyrosyl-[protein] + phosphate. Functionally, mediates dephosphorylation of MAPK substrates such as SLT2, acquiring enhanced catalytic activity under oxidative conditions. The sequence is that of Dual-specificity protein phosphatase SDP1 (SDP1) from Saccharomyces cerevisiae (strain ATCC 204508 / S288c) (Baker's yeast).